The chain runs to 753 residues: Replication restart protein PriA (753 aa).

A Helicase ATP-binding domain is found at 228 to 395 (SLITTKFQTC…LSKKYTLSVL (168 aa)). Residue 241-248 (GVTGSGKT) coordinates ATP. Residues 337 to 340 (DEEH) carry the DEAH box motif. The Zn(2+) site is built by Cys458, Cys461, Cys467, Cys470, Cys485, Cys488, Cys499, and Cys502. The 156-residue stretch at 491-646 (RLSKPITSCP…DFPAFYKEEI (156 aa)) folds into the Helicase C-terminal domain.

The protein belongs to the helicase family. PriA subfamily. As to quaternary structure, component of the replication restart primosome. Zn(2+) is required as a cofactor.

It carries out the reaction Couples ATP hydrolysis with the unwinding of duplex DNA by translocating in the 3'-5' direction.. The enzyme catalyses ATP + H2O = ADP + phosphate + H(+). Initiates the restart of stalled replication forks, which reloads the replicative helicase on sites other than the origin of replication. Recognizes and binds to abandoned replication forks and remodels them to uncover a helicase loading site. Promotes assembly of the primosome at these replication forks. This is Replication restart protein PriA from Chlamydia muridarum (strain MoPn / Nigg).